A 358-amino-acid chain; its full sequence is Membrane-bound lytic murein transglycosylase C (358 aa).

The first 16 residues, 1 to 16, serve as a signal peptide directing secretion; that stretch reads MKKILALLVIAPLLVS. Cysteine 17 carries N-palmitoyl cysteine lipidation. Cysteine 17 is lipidated: S-diacylglycerol cysteine.

Belongs to the transglycosylase Slt family.

The protein localises to the cell outer membrane. The catalysed reaction is Exolytic cleavage of the (1-&gt;4)-beta-glycosidic linkage between N-acetylmuramic acid (MurNAc) and N-acetylglucosamine (GlcNAc) residues in peptidoglycan, from either the reducing or the non-reducing ends of the peptidoglycan chains, with concomitant formation of a 1,6-anhydrobond in the MurNAc residue.. Murein-degrading enzyme. May play a role in recycling of muropeptides during cell elongation and/or cell division. The chain is Membrane-bound lytic murein transglycosylase C from Yersinia pseudotuberculosis serotype O:1b (strain IP 31758).